The following is a 644-amino-acid chain: Protein ETHYLENE-INSENSITIVE 3-like 1b (644 aa).

2 disordered regions span residues Gln47–Val75 and Glu97–Arg131. Residues Ala66 to Val75 show a composition bias toward acidic residues.

This sequence belongs to the EIN3 family. As to expression, highly expressed in roots. Expressed at low levels in leaves and panicles.

It localises to the nucleus. Its function is as follows. Transcription factor acting as a positive regulator in the ethylene response pathway. Involved in wound signaling by binding specifically to the DNA sequence 5'-ATGTACCT-3' found in the promoter of some wound-inducible genes. Binds directly to the DNA sequence 5'-TGTTACAAATACC-3' in the promoter of the GA20OX2 gene to activate its expression at the transcriptional level during ethylene signaling. The protein is Protein ETHYLENE-INSENSITIVE 3-like 1b of Oryza sativa subsp. japonica (Rice).